Consider the following 260-residue polypeptide: Carbonic anhydrase 2 (260 aa).

At Ser2 the chain carries N-acetylserine. The residue at position 2 (Ser2) is a Phosphoserine. Residues 3–259 form the Alpha-carbonic anhydrase domain; it reads HHWGYSKSNG…LKNRKIKASF (257 aa). The segment at 16–39 is disordered; that stretch reads WHKEFPIANGDRQSPVDIDTGTAQ. Catalysis depends on His64, which acts as the Proton donor/acceptor. The residue at position 87 (Ser87) is a Phosphoserine. Positions 94, 96, and 119 each coordinate Zn(2+). A Phosphoserine modification is found at Ser165. 198 to 199 provides a ligand contact to substrate; sequence TT. Phosphoserine is present on Ser232.

This sequence belongs to the alpha-carbonic anhydrase family. In terms of assembly, interacts with SLC4A4 and SLC26A6. Interaction with SLC4A7 regulates SLC4A7 transporter activity. Zn(2+) is required as a cofactor.

It localises to the cytoplasm. The protein resides in the cell membrane. It catalyses the reaction hydrogencarbonate + H(+) = CO2 + H2O. The catalysed reaction is urea = cyanamide + H2O. Its activity is regulated as follows. Inhibited by acetazolamide. Catalyzes the reversible hydration of carbon dioxide. Can also hydrate cyanamide to urea. Involved in the regulation of fluid secretion into the anterior chamber of the eye. Essential for bone resorption and osteoclast differentiation. Contributes to intracellular pH regulation in the duodenal upper villous epithelium during proton-coupled peptide absorption. Stimulates the chloride-bicarbonate exchange activity of SLC26A6. The chain is Carbonic anhydrase 2 (Ca2) from Rattus norvegicus (Rat).